The sequence spans 272 residues: 2-dehydro-3-deoxyphosphooctonate aldolase (272 aa).

Belongs to the KdsA family.

It localises to the cytoplasm. It catalyses the reaction D-arabinose 5-phosphate + phosphoenolpyruvate + H2O = 3-deoxy-alpha-D-manno-2-octulosonate-8-phosphate + phosphate. Its pathway is carbohydrate biosynthesis; 3-deoxy-D-manno-octulosonate biosynthesis; 3-deoxy-D-manno-octulosonate from D-ribulose 5-phosphate: step 2/3. It participates in bacterial outer membrane biogenesis; lipopolysaccharide biosynthesis. The protein is 2-dehydro-3-deoxyphosphooctonate aldolase of Geobacter sulfurreducens (strain ATCC 51573 / DSM 12127 / PCA).